The sequence spans 391 residues: Cytochrome P450 165A3 (391 aa).

The segment at 1–22 is disordered; the sequence is MFEEKNALRGTEIHRRERFDPG. C342 provides a ligand contact to heme.

The protein belongs to the cytochrome P450 family. Heme is required as a cofactor.

The protein operates within antibiotic biosynthesis; vancomycin biosynthesis. Involved in the coupling of aromatic side chains of the heptapeptide of vancomycin. The chain is Cytochrome P450 165A3 (cyp165A3) from Amycolatopsis orientalis (Nocardia orientalis).